The sequence spans 249 residues: Demethylmenaquinone methyltransferase (249 aa).

S-adenosyl-L-methionine contacts are provided by residues T67, D87, and 115 to 116 (DA).

It belongs to the class I-like SAM-binding methyltransferase superfamily. MenG/UbiE family.

It carries out the reaction a 2-demethylmenaquinol + S-adenosyl-L-methionine = a menaquinol + S-adenosyl-L-homocysteine + H(+). It participates in quinol/quinone metabolism; menaquinone biosynthesis; menaquinol from 1,4-dihydroxy-2-naphthoate: step 2/2. Functionally, methyltransferase required for the conversion of demethylmenaquinol (DMKH2) to menaquinol (MKH2). This chain is Demethylmenaquinone methyltransferase, found in Leptospira interrogans serogroup Icterohaemorrhagiae serovar copenhageni (strain Fiocruz L1-130).